The chain runs to 562 residues: NAD-dependent malic enzyme (562 aa).

The Proton donor role is filled by Tyr-101. Arg-154 is an NAD(+) binding site. The active-site Proton acceptor is the Lys-172. A divalent metal cation contacts are provided by Glu-243, Asp-244, and Asp-267. NAD(+) contacts are provided by Asp-267 and Asn-415.

It belongs to the malic enzymes family. As to quaternary structure, homotetramer. Mg(2+) serves as cofactor. Mn(2+) is required as a cofactor.

It catalyses the reaction (S)-malate + NAD(+) = pyruvate + CO2 + NADH. It carries out the reaction oxaloacetate + H(+) = pyruvate + CO2. The protein is NAD-dependent malic enzyme of Idiomarina loihiensis (strain ATCC BAA-735 / DSM 15497 / L2-TR).